A 290-amino-acid polypeptide reads, in one-letter code: Elongation factor Ts, mitochondrial 1 (290 aa).

This sequence belongs to the EF-Ts family.

It localises to the mitochondrion. Its function is as follows. Associates with the EF-Tu.GDP complex and induces the exchange of GDP to GTP. It remains bound to the aminoacyl-tRNA.EF-Tu.GTP complex up to the GTP hydrolysis stage on the ribosome. The chain is Elongation factor Ts, mitochondrial 1 from Postia placenta (strain ATCC 44394 / Madison 698-R) (Brown rot fungus).